The chain runs to 88 residues: U1-hexatoxin-Iw1d (88 aa).

The signal sequence occupies residues 1-17 (LKFVVLICLVIMASTSA). Position 18 is a pyrrolidone carboxylic acid (glutamine 18). 5 disulfides stabilise this stretch: cysteine 20–cysteine 31, cysteine 25–cysteine 39, cysteine 30–cysteine 65, cysteine 49–cysteine 73, and cysteine 67–cysteine 80. A propeptide spanning residues 86–88 (RSE) is cleaved from the precursor.

Belongs to the MIT-like AcTx family. Expressed by the venom gland.

Its subcellular location is the secreted. The polypeptide is U1-hexatoxin-Iw1d (Illawarra wisharti (Illawarra funnel-web spider)).